A 215-amino-acid chain; its full sequence is Adenylate kinase (215 aa).

10 to 15 (GSGKGT) is a binding site for ATP. Residues 30–59 (STGDILREHVRNGTELGKEAKKYMDAGQLV) are NMP. AMP contacts are provided by residues T31, R36, 57–59 (QLV), 85–88 (GYPR), and Q92. An LID region spans residues 126 to 162 (GRRMCKCGRSYHIIFNPPKVPGKCDECGGELYHRDDD). R127 provides a ligand contact to ATP. The Zn(2+) site is built by C130 and C132. 135-136 (SY) contacts ATP. Residues C149 and C152 each contribute to the Zn(2+) site. 2 residues coordinate AMP: R159 and R170. An ATP-binding site is contributed by G198.

Belongs to the adenylate kinase family. As to quaternary structure, monomer.

Its subcellular location is the cytoplasm. It carries out the reaction AMP + ATP = 2 ADP. The protein operates within purine metabolism; AMP biosynthesis via salvage pathway; AMP from ADP: step 1/1. Functionally, catalyzes the reversible transfer of the terminal phosphate group between ATP and AMP. Plays an important role in cellular energy homeostasis and in adenine nucleotide metabolism. The protein is Adenylate kinase of Methanothrix thermoacetophila (strain DSM 6194 / JCM 14653 / NBRC 101360 / PT) (Methanosaeta thermophila).